A 622-amino-acid chain; its full sequence is Low affinity potassium transport system protein Kup (622 aa).

The next 12 helical transmembrane spans lie at 9 to 29 (LSAVTLAAIGVVYGDIGTSPL), 46 to 66 (PDVVFGFLSLIFWMLILVVSV), 101 to 121 (ILVVLGLIGGSFFYGEVVITP), 137 to 157 (PALDPYIVPCSIAVLTLLFVI), 165 to 185 (VGKLFAPVMLVWFLTLALLGL), 213 to 233 (VSFFALGAVVLAITGVEALYA), 247 to 267 (WFTVVLPSLVLNYFGQGALLL), 276 to 296 (PFFLLAPDWALIPLLILATLA), 337 to 357 (IYIPVINWTLYLAVVLVIIGF), 363 to 383 (LAAAYGIAVTGTMVITSILFC), 395 to 415 (FLVVFLLMVLLIIDIPMFSAN), and 416 to 436 (VLKLFSGGWLPLSLGLVMFII).

The protein belongs to the HAK/KUP transporter (TC 2.A.72) family.

It is found in the cell inner membrane. It carries out the reaction K(+)(in) + H(+)(in) = K(+)(out) + H(+)(out). Functionally, responsible for the low-affinity transport of potassium into the cell. Likely operates as a K(+):H(+) symporter. The polypeptide is Low affinity potassium transport system protein Kup (Yersinia pestis (strain Pestoides F)).